The chain runs to 971 residues: Nuclear factor NF-kappa-B p110 subunit (971 aa).

Low complexity predominate over residues 23-41 (STSGYSSSTSPNSTNRSFS). The tract at residues 23–46 (STSGYSSSTSPNSTNRSFSPAHSP) is disordered. The 193-residue stretch at 147-339 (KHVPQLRIVE…NAINNRKSAQ (193 aa)) folds into the RHD domain. A Phosphoserine; by PKA modification is found at Ser-431. A Nuclear localization signal motif is present at residues 452 to 457 (SRKRRR). The segment at 453–496 (RKRRRTGSSANSSSSGTESSNNSLDLPKTLGLAQPPNGLPNLSQ) is disordered. The segment covering 460-475 (SSANSSSSGTESSNNS) has biased composition (low complexity). Phosphothreonine is present on Thr-620. Tyr-626 carries the phosphotyrosine modification. ANK repeat units lie at residues 640–669 (DGDSALHVACQQDRAHYIRPLLGMGCNPNL), 673–702 (AGNTPLHVAVKEEHLSCVESFLNGVPTVQL), 710–740 (DGLTPLHMAIRQNKYDVAKKLISYDRTSISV), 745–775 (DGNNALHMAVLEQSVELLVLILDAQNENLTD), and 783–812 (AGHTPLELAERKANDRVVQLLKNVYPEKGE). Residues 826–877 (IDSSSDESSDAGQLEIKSEEMDIETKDEDSVELDLSSGPRRQKDESSRDTEM) are disordered. The span at 866 to 877 (RQKDESSRDTEM) shows a compositional bias: basic and acidic residues. At Ser-950 the chain carries Phosphoserine.

In terms of assembly, rel-p68 subunit interacts with Dredd. Interacts with DMAP1. Interacts with akirin; interaction is immune stimulation-dependent; activates selected rel target gene promoters. Post-translationally, phosphorylated by lipopolysaccharide (LPS)-activated I-kappa-B kinase complex before being cleaved. Rel-p110 subunit is cleaved within seconds of an immune challenge into Rel-p49 subunit and Rel-p68 subunit. Rel-p110 subunit reappears after 45 minutes.

It localises to the nucleus. Its subcellular location is the cytoplasm. In terms of biological role, transcription factor that plays a key role in the humoral immune response as part of the peptidoglycan recognition protein (IMD) signaling pathway. Rel-p68 subunit translocates to the nucleus where it binds to the promoter of the Cecropin A1 gene and probably other antimicrobial peptide genes. I-kappa-B kinase complex (IKKbeta and key) and PGRP-LC are essential signaling components in transmitting the lipopolysaccharide (LPS) signal leading to cact degradation for NF-kappa-B (rel) activation. Part of a Toll-related receptor pathway that functions in the apoptosis of unfit cells during cell competition. Also part of some antiviral immunity: activated downstream of Sting signaling, which detects double-stranded RNA (dsRNA) from viruses, and promotes expression of antiviral effector genes. May be part of a NF-kappa-B and Tollo signaling cascade that regulates development of the peripheral nervous system. Possibly post-transcriptionally regulates the neuron-specific genes sc and ase, by promoting the rapid turnover of their transcripts in the wing imaginal disk. The protein is Nuclear factor NF-kappa-B p110 subunit of Drosophila melanogaster (Fruit fly).